Reading from the N-terminus, the 193-residue chain is Peptidyl-tRNA hydrolase (193 aa).

Y14 is a tRNA binding site. H19 acts as the Proton acceptor in catalysis. TRNA-binding residues include F64, N66, and N112.

Belongs to the PTH family. As to quaternary structure, monomer.

It is found in the cytoplasm. It carries out the reaction an N-acyl-L-alpha-aminoacyl-tRNA + H2O = an N-acyl-L-amino acid + a tRNA + H(+). Its function is as follows. Hydrolyzes ribosome-free peptidyl-tRNAs (with 1 or more amino acids incorporated), which drop off the ribosome during protein synthesis, or as a result of ribosome stalling. Catalyzes the release of premature peptidyl moieties from peptidyl-tRNA molecules trapped in stalled 50S ribosomal subunits, and thus maintains levels of free tRNAs and 50S ribosomes. The chain is Peptidyl-tRNA hydrolase from Bartonella quintana (strain Toulouse) (Rochalimaea quintana).